A 259-amino-acid polypeptide reads, in one-letter code: Ditrans,polycis-undecaprenyl-diphosphate synthase ((2E,6E)-farnesyl-diphosphate specific) (259 aa).

Asp-32 is an active-site residue. Asp-32 contacts Mg(2+). Residues 33–36 (GNGR), Trp-37, Arg-45, His-49, and 77–79 (STE) each bind substrate. The active-site Proton acceptor is Asn-80. Residues Trp-81, Arg-83, Arg-203, and 209-211 (RIS) contribute to the substrate site. A Mg(2+)-binding site is contributed by Glu-222.

It belongs to the UPP synthase family. In terms of assembly, homodimer. Mg(2+) is required as a cofactor.

The enzyme catalyses 8 isopentenyl diphosphate + (2E,6E)-farnesyl diphosphate = di-trans,octa-cis-undecaprenyl diphosphate + 8 diphosphate. Functionally, catalyzes the sequential condensation of isopentenyl diphosphate (IPP) with (2E,6E)-farnesyl diphosphate (E,E-FPP) to yield (2Z,6Z,10Z,14Z,18Z,22Z,26Z,30Z,34E,38E)-undecaprenyl diphosphate (di-trans,octa-cis-UPP). UPP is the precursor of glycosyl carrier lipid in the biosynthesis of bacterial cell wall polysaccharide components such as peptidoglycan and lipopolysaccharide. The sequence is that of Ditrans,polycis-undecaprenyl-diphosphate synthase ((2E,6E)-farnesyl-diphosphate specific) (uppS) from Lactiplantibacillus plantarum (strain ATCC BAA-793 / NCIMB 8826 / WCFS1) (Lactobacillus plantarum).